Here is a 495-residue protein sequence, read N- to C-terminus: Glutamyl-tRNA(Gln) amidotransferase subunit A (495 aa).

Residues K78 and S159 each act as charge relay system in the active site. The active-site Acyl-ester intermediate is the S183.

Belongs to the amidase family. GatA subfamily. In terms of assembly, heterotrimer of A, B and C subunits.

The enzyme catalyses L-glutamyl-tRNA(Gln) + L-glutamine + ATP + H2O = L-glutaminyl-tRNA(Gln) + L-glutamate + ADP + phosphate + H(+). Functionally, allows the formation of correctly charged Gln-tRNA(Gln) through the transamidation of misacylated Glu-tRNA(Gln) in organisms which lack glutaminyl-tRNA synthetase. The reaction takes place in the presence of glutamine and ATP through an activated gamma-phospho-Glu-tRNA(Gln). The sequence is that of Glutamyl-tRNA(Gln) amidotransferase subunit A from Rhizorhabdus wittichii (strain DSM 6014 / CCUG 31198 / JCM 15750 / NBRC 105917 / EY 4224 / RW1) (Sphingomonas wittichii).